The following is a 1366-amino-acid chain: DNA-directed RNA polymerase subunit beta' (1366 aa).

The span at 1–20 shows a compositional bias: basic residues; the sequence is MTSSKPKKTSRVRKTTKNSK. The segment at 1-34 is disordered; that stretch reads MTSSKPKKTSRVRKTTKNSKKNNPLTMPALAKTP. Zn(2+) is bound by residues Cys-248, Cys-315, Cys-322, and Cys-325. Positions 1291–1366 are disordered; sequence YTVDMPQSPS…LQEEGLLSDE (76 aa). Positions 1295-1305 are enriched in polar residues; it reads MPQSPSVSSTA. Residues 1354-1366 are compositionally biased toward low complexity; sequence LEGLQEEGLLSDE.

The protein belongs to the RNA polymerase beta' chain family. RpoC2 subfamily. In terms of assembly, in cyanobacteria the RNAP catalytic core is composed of 2 alpha, 1 beta, 1 beta', 1 gamma and 1 omega subunit. When a sigma factor is associated with the core the holoenzyme is formed, which can initiate transcription. Zn(2+) serves as cofactor.

It carries out the reaction RNA(n) + a ribonucleoside 5'-triphosphate = RNA(n+1) + diphosphate. DNA-dependent RNA polymerase catalyzes the transcription of DNA into RNA using the four ribonucleoside triphosphates as substrates. The protein is DNA-directed RNA polymerase subunit beta' of Prochlorococcus marinus (strain MIT 9301).